Consider the following 858-residue polypeptide: MSAHAAPSPEALSRRAEFKAAKTEMLERFRRAANVASLMHALSKLTDEALKRVWDDCGLPATLALVAVGGYGRGELAPYSDVDILVLLPDAHDPALDARIERFIGMAWDLGLEIGSSVRTVAQCIEEASQDVTVQTSLLEARRIVGSTALFERFTVHYHEALDARAFFTAKVLEMRQRHAKFQDTPYSLEPNVKESPGGLRDLQTILWIARAAGFGSSWRELDTRGLITDREARELRRNEGFLKTLRARLHVIAGRRQDMLVFDLQTQAAESFGYEPTQAKRASEQLMRRYYWAAKAVTQLATILIQNIEAQLFPATSGITRVLSPDRFVEKQGMLEIVDDGVFERHPDAILEAFLLYETTRGVKGLSARTLRALYNSREIMNNTWRRDPQNRDTFMRILQQPEGITHAFRLMNQTSVLGRYLLNFRRIVGQMQHDLYHVYTVDQHILMVLRNIRRFAVAEHAHEYPFCSQLIGNFERPWVLYVAALFHDIAKGRGGDHSTLGMADARRFCREHGIASDDAALIVWLVQHHLTMSQVAQKQDTSDPEVIKRFAEVVGNERYLTALYLLTVADIRGTSPKVWNTWKGKLLEDLYRITLAVLGGANPDAHSELKSRQEQALALLRLETVPDDAHRTLWDQLDVGFFLRHDAADIAWQTRVLYRHVNAETAIVRARPSPIGDALQVLVYVKDRPDLFAGICAYFDRNGLSVLDARVSTTRHGYALDNFIVTQTERDVRYRDIANLVEQQLASRLTETAPLPEPSKGRLSRLSRTFPITPRVDLRADERGQYYILSVSANDRPGLLYSIARVLAEHRIGVHAARINTLGERVEDIFLLAGAGLSDNRLQIQLETELLRAIAV.

The tract at residues 1–324 is uridylyltransferase; sequence MSAHAAPSPE…PATSGITRVL (324 aa). Residues 325–681 form a uridylyl-removing region; that stretch reads SPDRFVEKQG…ARPSPIGDAL (357 aa). An HD domain is found at 443-565; the sequence is VDQHILMVLR…VGNERYLTAL (123 aa). ACT domains follow at residues 682 to 761 and 790 to 858; these read QVLV…PEPS and ILSV…AIAV.

It belongs to the GlnD family. The cofactor is Mg(2+).

The enzyme catalyses [protein-PII]-L-tyrosine + UTP = [protein-PII]-uridylyl-L-tyrosine + diphosphate. It catalyses the reaction [protein-PII]-uridylyl-L-tyrosine + H2O = [protein-PII]-L-tyrosine + UMP + H(+). With respect to regulation, uridylyltransferase (UTase) activity is inhibited by glutamine, while glutamine activates uridylyl-removing (UR) activity. Its function is as follows. Modifies, by uridylylation and deuridylylation, the PII regulatory proteins (GlnB and homologs), in response to the nitrogen status of the cell that GlnD senses through the glutamine level. Under low glutamine levels, catalyzes the conversion of the PII proteins and UTP to PII-UMP and PPi, while under higher glutamine levels, GlnD hydrolyzes PII-UMP to PII and UMP (deuridylylation). Thus, controls uridylylation state and activity of the PII proteins, and plays an important role in the regulation of nitrogen fixation and metabolism. In Burkholderia lata (strain ATCC 17760 / DSM 23089 / LMG 22485 / NCIMB 9086 / R18194 / 383), this protein is Bifunctional uridylyltransferase/uridylyl-removing enzyme.